A 741-amino-acid polypeptide reads, in one-letter code: NAD(P)H-quinone oxidoreductase subunit 5, chloroplastic (741 aa).

16 helical membrane-spanning segments follow: residues 9–29, 39–59, 89–109, 125–145, 147–167, 185–205, 219–239, 258–278, 280–300, 327–347, 354–374, 396–416, 425–445, 542–562, 605–625, and 721–741; these read WVIPLLPLPVIMSMGFGLFFI, IWAFPSVLFLSIAMVFSIQLS, IDPLTSIMLILITTVGILVLI, FVYISFFTTSMLGLVTSSNLI, IYFFWELVGMCSYLLIGFWFT, GDFGLLLGILGFFWITGSLEF, NGINSLLTTLCAFLLFLGAVA, TPISALIHAATMVAAGIFLLA, LFPLFISLPLIMTLISLVGTI, LGYMMLALGIGSYQAALFHLI, ALLFLGSGSIIHSMEPLVGYS, TTFLWGTLSLCGIPPLACFWS, WLYSPFFGIIASFTAGLTAFY, LFPLLILLLFTLFIGFIGISF, AISSVSLAIFGLFIAYILYGS, and ISSYLFFFLCYVSVFLFFFIS.

This sequence belongs to the complex I subunit 5 family. In terms of assembly, NDH is composed of at least 16 different subunits, 5 of which are encoded in the nucleus.

The protein resides in the plastid. Its subcellular location is the chloroplast thylakoid membrane. It catalyses the reaction a plastoquinone + NADH + (n+1) H(+)(in) = a plastoquinol + NAD(+) + n H(+)(out). It carries out the reaction a plastoquinone + NADPH + (n+1) H(+)(in) = a plastoquinol + NADP(+) + n H(+)(out). Functionally, NDH shuttles electrons from NAD(P)H:plastoquinone, via FMN and iron-sulfur (Fe-S) centers, to quinones in the photosynthetic chain and possibly in a chloroplast respiratory chain. The immediate electron acceptor for the enzyme in this species is believed to be plastoquinone. Couples the redox reaction to proton translocation, and thus conserves the redox energy in a proton gradient. This chain is NAD(P)H-quinone oxidoreductase subunit 5, chloroplastic (ndhF), found in Lolium perenne (Perennial ryegrass).